The chain runs to 172 residues: 3-hydroxydecanoyl-[acyl-carrier-protein] dehydratase (172 aa).

The active site involves His-71.

This sequence belongs to the thioester dehydratase family. FabA subfamily. In terms of assembly, homodimer.

It is found in the cytoplasm. It carries out the reaction a (3R)-hydroxyacyl-[ACP] = a (2E)-enoyl-[ACP] + H2O. The enzyme catalyses (3R)-hydroxydecanoyl-[ACP] = (2E)-decenoyl-[ACP] + H2O. It catalyses the reaction (2E)-decenoyl-[ACP] = (3Z)-decenoyl-[ACP]. It participates in lipid metabolism; fatty acid biosynthesis. Functionally, necessary for the introduction of cis unsaturation into fatty acids. Catalyzes the dehydration of (3R)-3-hydroxydecanoyl-ACP to E-(2)-decenoyl-ACP and then its isomerization to Z-(3)-decenoyl-ACP. Can catalyze the dehydratase reaction for beta-hydroxyacyl-ACPs with saturated chain lengths up to 16:0, being most active on intermediate chain length. The polypeptide is 3-hydroxydecanoyl-[acyl-carrier-protein] dehydratase (Cronobacter sakazakii (strain ATCC BAA-894) (Enterobacter sakazakii)).